We begin with the raw amino-acid sequence, 130 residues long: Iron-sulfur cluster insertion protein ErpA (130 aa).

The iron-sulfur cluster site is built by Cys-46, Cys-116, and Cys-118.

It belongs to the HesB/IscA family. Homodimer. It depends on iron-sulfur cluster as a cofactor.

Its function is as follows. Required for insertion of 4Fe-4S clusters for at least IspG. The sequence is that of Iron-sulfur cluster insertion protein ErpA from Legionella pneumophila subsp. pneumophila (strain Philadelphia 1 / ATCC 33152 / DSM 7513).